The sequence spans 137 residues: MQRLLGSIVILATVFTFCEATISSACLRCICNVESGCRPIGCHYDVYSYSCGYFQIKENYWEDCGKPGTSFKACANDYTCASNCVRAYMKRYIGSSGCPANCESYARIHNGGPRGCRHPSTLRYWEKVHQQGCNVNS.

The N-terminal stretch at 1–20 (MQRLLGSIVILATVFTFCEA) is a signal peptide. Positions 21–135 (TISSACLRCI…EKVHQQGCNV (115 aa)) constitute an I-type lysozyme domain. 6 cysteine pairs are disulfide-bonded: C26–C102, C31–C37, C42–C51, C64–C84, C74–C80, and C98–C116. The active-site Proton donor is the E34. D45 serves as the catalytic Nucleophile. 57–63 (KENYWED) lines the substrate pocket. Substrate-binding positions include Y88 and 109–111 (HNG).

This sequence belongs to the glycosyl hydrolase 22 family. Type-I lysozyme subfamily. In terms of tissue distribution, expressed in the basophil cells of the oyster digestive gland.

The protein resides in the secreted. The catalysed reaction is Hydrolysis of (1-&gt;4)-beta-linkages between N-acetylmuramic acid and N-acetyl-D-glucosamine residues in a peptidoglycan and between N-acetyl-D-glucosamine residues in chitodextrins.. Has bacteriolytic activity. May play a role in digestion and in the host defense mechanisms against invading microbes. This Magallana gigas (Pacific oyster) protein is Lysozyme (lysoz).